A 668-amino-acid polypeptide reads, in one-letter code: Alpha-1,4-glucan:maltose-1-phosphate maltosyltransferase (668 aa).

A disordered region spans residues 263–288; it reads RKGRNNSLTPAPDDPGSPYAIGSEEG. Residues lysine 264, glutamine 324, and aspartate 359 each contribute to the alpha-maltose 1-phosphate site. Aspartate 395 acts as the Nucleophile in catalysis. Asparagine 396 is an alpha-maltose 1-phosphate binding site. Glutamate 424 serves as the catalytic Proton donor. 535 to 536 serves as a coordination point for alpha-maltose 1-phosphate; sequence KY.

This sequence belongs to the glycosyl hydrolase 13 family. GlgE subfamily. As to quaternary structure, homodimer.

It catalyses the reaction alpha-maltose 1-phosphate + [(1-&gt;4)-alpha-D-glucosyl](n) = [(1-&gt;4)-alpha-D-glucosyl](n+2) + phosphate. Its function is as follows. Maltosyltransferase that uses maltose 1-phosphate (M1P) as the sugar donor to elongate linear or branched alpha-(1-&gt;4)-glucans. Is involved in a branched alpha-glucan biosynthetic pathway from trehalose, together with TreS, Mak and GlgB. This Cereibacter sphaeroides (strain ATCC 17023 / DSM 158 / JCM 6121 / CCUG 31486 / LMG 2827 / NBRC 12203 / NCIMB 8253 / ATH 2.4.1.) (Rhodobacter sphaeroides) protein is Alpha-1,4-glucan:maltose-1-phosphate maltosyltransferase.